Reading from the N-terminus, the 266-residue chain is 3-methyl-2-oxobutanoate hydroxymethyltransferase (266 aa).

The Mg(2+) site is built by Asp-45 and Asp-84. 3-methyl-2-oxobutanoate-binding positions include 45 to 46, Asp-84, and Lys-112; that span reads DS. Mg(2+) is bound at residue Glu-114. The Proton acceptor role is filled by Glu-181.

This sequence belongs to the PanB family. As to quaternary structure, homodecamer; pentamer of dimers. Requires Mg(2+) as cofactor.

The protein resides in the cytoplasm. It carries out the reaction 3-methyl-2-oxobutanoate + (6R)-5,10-methylene-5,6,7,8-tetrahydrofolate + H2O = 2-dehydropantoate + (6S)-5,6,7,8-tetrahydrofolate. Its pathway is cofactor biosynthesis; (R)-pantothenate biosynthesis; (R)-pantoate from 3-methyl-2-oxobutanoate: step 1/2. Its function is as follows. Catalyzes the reversible reaction in which hydroxymethyl group from 5,10-methylenetetrahydrofolate is transferred onto alpha-ketoisovalerate to form ketopantoate. This is 3-methyl-2-oxobutanoate hydroxymethyltransferase from Stutzerimonas stutzeri (strain A1501) (Pseudomonas stutzeri).